The chain runs to 188 residues: Elongation factor P (188 aa).

Belongs to the elongation factor P family.

It localises to the cytoplasm. It functions in the pathway protein biosynthesis; polypeptide chain elongation. In terms of biological role, involved in peptide bond synthesis. Stimulates efficient translation and peptide-bond synthesis on native or reconstituted 70S ribosomes in vitro. Probably functions indirectly by altering the affinity of the ribosome for aminoacyl-tRNA, thus increasing their reactivity as acceptors for peptidyl transferase. In Rickettsia bellii (strain OSU 85-389), this protein is Elongation factor P.